The primary structure comprises 308 residues: Ribosomal RNA large subunit methyltransferase F (308 aa).

This sequence belongs to the methyltransferase superfamily. METTL16/RlmF family.

It is found in the cytoplasm. The enzyme catalyses adenosine(1618) in 23S rRNA + S-adenosyl-L-methionine = N(6)-methyladenosine(1618) in 23S rRNA + S-adenosyl-L-homocysteine + H(+). Its function is as follows. Specifically methylates the adenine in position 1618 of 23S rRNA. This Escherichia coli (strain K12 / MC4100 / BW2952) protein is Ribosomal RNA large subunit methyltransferase F.